The sequence spans 143 residues: Small ribosomal subunit protein uS9 (143 aa).

The tract at residues 123–143 (RPEPKKFGGRGARARFQKSYR) is disordered. Over residues 134 to 143 (ARARFQKSYR) the composition is skewed to basic residues.

This sequence belongs to the universal ribosomal protein uS9 family.

The protein is Small ribosomal subunit protein uS9 (RPS16) of Eremothecium gossypii (strain ATCC 10895 / CBS 109.51 / FGSC 9923 / NRRL Y-1056) (Yeast).